A 602-amino-acid chain; its full sequence is Elongation factor 4 (602 aa).

Residues 2 to 184 form the tr-type G domain; sequence NHIRNFSIIA…AVVAKVPPPK (183 aa). Residues 14 to 19 and 131 to 134 each bind GTP; these read DHGKST and NKMD.

Belongs to the TRAFAC class translation factor GTPase superfamily. Classic translation factor GTPase family. LepA subfamily.

It is found in the cell inner membrane. It catalyses the reaction GTP + H2O = GDP + phosphate + H(+). Its function is as follows. Required for accurate and efficient protein synthesis under certain stress conditions. May act as a fidelity factor of the translation reaction, by catalyzing a one-codon backward translocation of tRNAs on improperly translocated ribosomes. Back-translocation proceeds from a post-translocation (POST) complex to a pre-translocation (PRE) complex, thus giving elongation factor G a second chance to translocate the tRNAs correctly. Binds to ribosomes in a GTP-dependent manner. The protein is Elongation factor 4 of Delftia acidovorans (strain DSM 14801 / SPH-1).